The sequence spans 82 residues: Acyl carrier protein (82 aa).

One can recognise a Carrier domain in the interval Leu3 to Lys81. Ser41 bears the O-(pantetheine 4'-phosphoryl)serine mark.

The protein belongs to the acyl carrier protein (ACP) family. Post-translationally, 4'-phosphopantetheine is transferred from CoA to a specific serine of apo-ACP by AcpS. This modification is essential for activity because fatty acids are bound in thioester linkage to the sulfhydryl of the prosthetic group.

It is found in the cytoplasm. It participates in lipid metabolism; fatty acid biosynthesis. In terms of biological role, carrier of the growing fatty acid chain in fatty acid biosynthesis. This chain is Acyl carrier protein, found in Tropheryma whipplei (strain Twist) (Whipple's bacillus).